The chain runs to 309 residues: MPGNSRRRGAVRKSGTNKGTTVGSGGQRRRALEGRGPTPPAYLRPNHPAAKRNQSSPHRPVKRTDETETVLGRNPVLECLRAGVPATALYVALGTEVDKRLTESVMRAADVGVAILEVPRTYLDRITNNHLHQGIALQVPPYHYVHSDDLLAAATDSPPALLVALDNISDPRNLGAIVRSVAAFSGHGILIPQRRSASVTAVAWRTSAGAAARIPVARATNLTRALKVWADQGLRVIGLDHDGDTALDDLDGTDPLAVVVGSEGKGLSRLVRHSCDEVVSIPMAGQVESLNASVAVGVVLAEIARQRRL.

A compositionally biased stretch (basic residues) spans 1–11 (MPGNSRRRGAV). The segment at 1-69 (MPGNSRRRGA…PVKRTDETET (69 aa)) is disordered. S-adenosyl-L-methionine contacts are provided by G261, I281, and L290.

This sequence belongs to the class IV-like SAM-binding methyltransferase superfamily. RNA methyltransferase TrmH family.

This is an uncharacterized protein from Mycobacterium leprae (strain TN).